Here is a 619-residue protein sequence, read N- to C-terminus: Threonine--tRNA ligase (619 aa).

An editing domain region spans residues 1–143 (MQLLLIHSDF…SRSIRIGEGE (143 aa)). The segment at 201–500 (PHVELMRRLE…AANGGLPMLP (300 aa)) is catalytic. The Zn(2+) site is built by Cys293, His345, and His469.

It belongs to the class-II aminoacyl-tRNA synthetase family. In terms of assembly, homodimer. Zn(2+) serves as cofactor.

Its subcellular location is the cytoplasm. It carries out the reaction tRNA(Thr) + L-threonine + ATP = L-threonyl-tRNA(Thr) + AMP + diphosphate + H(+). In terms of biological role, catalyzes the attachment of threonine to tRNA(Thr) in a two-step reaction: L-threonine is first activated by ATP to form Thr-AMP and then transferred to the acceptor end of tRNA(Thr). Also edits incorrectly charged L-seryl-tRNA(Thr). This chain is Threonine--tRNA ligase, found in Methanothrix thermoacetophila (strain DSM 6194 / JCM 14653 / NBRC 101360 / PT) (Methanosaeta thermophila).